A 122-amino-acid polypeptide reads, in one-letter code: Yop proteins translocation protein X (122 aa).

Residues 71–87 (HRAQDYRRELDTLQSLL) are a coiled coil.

Interacts with YscY.

It localises to the secreted. Functionally, required for Yop secretion. This is Yop proteins translocation protein X (yscX) from Yersinia enterocolitica.